Consider the following 175-residue polypeptide: MLPPMALPSVSWMLLSCLILLCQVQGEETQKELPSPRISCPKGSKAYGSPCYALFLSPKSWMDADLACQKRPSGKLVSVLSGAEGSFVSSLVRSISNSYSYIWIGLHDPTQGSEPDGDGWEWSSTDVMNYFAWEKNPSTILNPGHCGSLSRSTGFLKWKDYNCDAKLPYVCKFKD.

Residues 1–26 form the signal peptide; that stretch reads MLPPMALPSVSWMLLSCLILLCQVQG. The propeptide occupies 27–37; that stretch reads EETQKELPSPR. 3 cysteine pairs are disulfide-bonded: Cys-40–Cys-51, Cys-68–Cys-171, and Cys-146–Cys-163. A C-type lectin domain is found at 47–172; the sequence is YGSPCYALFL…CDAKLPYVCK (126 aa). A sufficient to activate EXTL3 region spans residues 103 to 118; sequence WIGLHDPTQGSEPDGD. Residue His-107 participates in Zn(2+) binding. The EPN motif lies at 114–116; it reads EPD. Glu-121 and His-145 together coordinate Zn(2+).

As to quaternary structure, forms a hexameric membrane-permeabilizing oligomeric pore on membrane phospholipids. The hexamer is formed by three dimers related by helical symmetry. Forms filaments, filamentation traps pore complexes and limits damage to host cells. Interacts with EXTL3. Post-translationally, proteolytic processing by trypsin removes an inhibitory N-terminal propeptide and is essential for peptidoglycan binding and antibacterial activity. In terms of tissue distribution, predominantly expressed in pancreas, where it may be restricted to exocrine pancreas. Moderate expression levels in testis and weak in heart, kidney and placenta.

The protein localises to the secreted. The protein resides in the cytoplasm. With respect to regulation, lipopolysaccharide inhibits pore-forming activity, explaining why is bactericidal for Gram-positive but not Gram-negative bacteria. Functionally, bactericidal C-type lectin which acts exclusively against Gram-positive bacteria and mediates bacterial killing by binding to surface-exposed carbohydrate moieties of peptidoglycan. Restricts bacterial colonization of the intestinal epithelial surface and consequently limits activation of adaptive immune responses by the microbiota. Its function is as follows. Acts as a hormone in response to different stimuli like anti-inflammatory signals, such as IL17A, or gut microbiome. Is secreted by different cell types to activate its receptor EXTL3 and induce cell specific signaling pathways. Induced by IL17A in keratinocytes, regulates keratinocyte proliferation and differentiation after skin injury. In parallel, inhibits skin inflammation through the inhibition of inflammatory cytokines such as IL6 and TNF. Induced by IL22 in lung epithelial cells, inhibits cytokine production and regulates allergic airway inflammation. Induced in small intestine by inulin-enriched diet and Lactobacillus gasseri enriched microbiome, plays a role in the improvement of gut barrier function, the regulation of energy balance and glucose levels. Modulates microbiota composition in duodenal contents. Produced by nociceptor in response to endotoxins, prevents endotoxic death by targeting kynurenine pathway in microglia. Has bacteriostatic activity. In terms of biological role, has bactericidal activity against L.monocytogenes and methicillin-resistant S.aureus. This is Regenerating islet-derived protein 3-gamma from Homo sapiens (Human).